Reading from the N-terminus, the 171-residue chain is LIM domain transcription factor LMO4-B (171 aa).

Positions 1 to 19 (MVNNRISESTTTAVSNNGS) are enriched in polar residues. Positions 1-20 (MVNNRISESTTTAVSNNGSP) are disordered. LIM zinc-binding domains are found at residues 22 to 84 (KACA…LFGN) and 86 to 148 (GACN…GLLN).

Functionally, acts as a positive cofactor of GATA transcription factors to establish the identity of the ventral mesoderm during gastrulation. Down-regulation in the dorsal mesoderm is necessary for the proper formation of this territory since, when present, lmo4 may bind ldb1 and restrict the availability of this cofactor for Spemman organizer transcription factors. At neurula stages, suppresses primary neuron differentiation and modulates gene expression at the Isthmic Organizer of the midbrain-hindbrain boundary. The protein is LIM domain transcription factor LMO4-B (lmo4-b) of Xenopus laevis (African clawed frog).